The chain runs to 176 residues: Ribosome maturation factor RimM (176 aa).

Positions K102–W175 constitute a PRC barrel domain.

It belongs to the RimM family. In terms of assembly, binds ribosomal protein uS19.

It is found in the cytoplasm. Its function is as follows. An accessory protein needed during the final step in the assembly of 30S ribosomal subunit, possibly for assembly of the head region. Essential for efficient processing of 16S rRNA. May be needed both before and after RbfA during the maturation of 16S rRNA. It has affinity for free ribosomal 30S subunits but not for 70S ribosomes. This chain is Ribosome maturation factor RimM, found in Buchnera aphidicola subsp. Acyrthosiphon pisum (strain APS) (Acyrthosiphon pisum symbiotic bacterium).